The sequence spans 332 residues: tRNA-dihydrouridine(20/20a) synthase (332 aa).

Residues 20–22 and Gln73 each bind FMN; that span reads PMM. Catalysis depends on Cys103, which acts as the Proton donor. FMN contacts are provided by residues Lys142, His174, 214-216, and 236-237; these read NGG and GR.

This sequence belongs to the Dus family. DusA subfamily. The cofactor is FMN.

It carries out the reaction 5,6-dihydrouridine(20) in tRNA + NADP(+) = uridine(20) in tRNA + NADPH + H(+). It catalyses the reaction 5,6-dihydrouridine(20) in tRNA + NAD(+) = uridine(20) in tRNA + NADH + H(+). The enzyme catalyses 5,6-dihydrouridine(20a) in tRNA + NADP(+) = uridine(20a) in tRNA + NADPH + H(+). The catalysed reaction is 5,6-dihydrouridine(20a) in tRNA + NAD(+) = uridine(20a) in tRNA + NADH + H(+). Catalyzes the synthesis of 5,6-dihydrouridine (D), a modified base found in the D-loop of most tRNAs, via the reduction of the C5-C6 double bond in target uridines. Specifically modifies U20 and U20a in tRNAs. The protein is tRNA-dihydrouridine(20/20a) synthase of Pseudomonas aeruginosa (strain ATCC 15692 / DSM 22644 / CIP 104116 / JCM 14847 / LMG 12228 / 1C / PRS 101 / PAO1).